The chain runs to 261 residues: Putative hydro-lyase SAR11_0660 (261 aa).

Belongs to the D-glutamate cyclase family.

This is Putative hydro-lyase SAR11_0660 from Pelagibacter ubique (strain HTCC1062).